The sequence spans 373 residues: 4-hydroxy-3-methylbut-2-en-1-yl diphosphate synthase (flavodoxin) (373 aa).

Positions 269, 272, 304, and 311 each coordinate [4Fe-4S] cluster.

The protein belongs to the IspG family. The cofactor is [4Fe-4S] cluster.

It catalyses the reaction (2E)-4-hydroxy-3-methylbut-2-enyl diphosphate + oxidized [flavodoxin] + H2O + 2 H(+) = 2-C-methyl-D-erythritol 2,4-cyclic diphosphate + reduced [flavodoxin]. It functions in the pathway isoprenoid biosynthesis; isopentenyl diphosphate biosynthesis via DXP pathway; isopentenyl diphosphate from 1-deoxy-D-xylulose 5-phosphate: step 5/6. In terms of biological role, converts 2C-methyl-D-erythritol 2,4-cyclodiphosphate (ME-2,4cPP) into 1-hydroxy-2-methyl-2-(E)-butenyl 4-diphosphate. The polypeptide is 4-hydroxy-3-methylbut-2-en-1-yl diphosphate synthase (flavodoxin) (Baumannia cicadellinicola subsp. Homalodisca coagulata).